The primary structure comprises 388 residues: Lipoyl synthase, mitochondrial (388 aa).

The N-terminal 18 residues, 1–18, are a transit peptide targeting the mitochondrion; it reads MRLTTVQRRFLVSTKAKV. Positions 22–39 are enriched in low complexity; sequence SISSTANTGSASAGAPNG. The tract at residues 22 to 43 is disordered; that stretch reads SISSTANTGSASAGAPNGQTRR. Residues cysteine 120, cysteine 125, cysteine 131, cysteine 151, cysteine 155, cysteine 158, and serine 366 each contribute to the [4Fe-4S] cluster site. In terms of domain architecture, Radical SAM core spans 134-355; sequence GKDKSKATAT…KDKAKEMGFL (222 aa).

This sequence belongs to the radical SAM superfamily. Lipoyl synthase family. It depends on [4Fe-4S] cluster as a cofactor.

The protein localises to the mitochondrion. It catalyses the reaction [[Fe-S] cluster scaffold protein carrying a second [4Fe-4S](2+) cluster] + N(6)-octanoyl-L-lysyl-[protein] + 2 oxidized [2Fe-2S]-[ferredoxin] + 2 S-adenosyl-L-methionine + 4 H(+) = [[Fe-S] cluster scaffold protein] + N(6)-[(R)-dihydrolipoyl]-L-lysyl-[protein] + 4 Fe(3+) + 2 hydrogen sulfide + 2 5'-deoxyadenosine + 2 L-methionine + 2 reduced [2Fe-2S]-[ferredoxin]. It functions in the pathway protein modification; protein lipoylation via endogenous pathway; protein N(6)-(lipoyl)lysine from octanoyl-[acyl-carrier-protein]: step 2/2. Catalyzes the radical-mediated insertion of two sulfur atoms into the C-6 and C-8 positions of the octanoyl moiety bound to the lipoyl domains of lipoate-dependent enzymes, thereby converting the octanoylated domains into lipoylated derivatives. The sequence is that of Lipoyl synthase, mitochondrial from Candida glabrata (strain ATCC 2001 / BCRC 20586 / JCM 3761 / NBRC 0622 / NRRL Y-65 / CBS 138) (Yeast).